The chain runs to 123 residues: Large ribosomal subunit protein bL12 (123 aa).

This sequence belongs to the bacterial ribosomal protein bL12 family. As to quaternary structure, homodimer. Part of the ribosomal stalk of the 50S ribosomal subunit. Forms a multimeric L10(L12)X complex, where L10 forms an elongated spine to which 2 to 4 L12 dimers bind in a sequential fashion. Binds GTP-bound translation factors.

Functionally, forms part of the ribosomal stalk which helps the ribosome interact with GTP-bound translation factors. Is thus essential for accurate translation. This is Large ribosomal subunit protein bL12 from Aliarcobacter butzleri (strain RM4018) (Arcobacter butzleri).